The following is a 189-amino-acid chain: GTPase HRas (189 aa).

10–17 (GAKGVGKS) lines the GTP pocket. The Effector region motif lies at 32-40 (YDPTIEDSY). GTP is bound by residues 57 to 61 (DTAGQ) and 116 to 119 (NKCD). 2 S-palmitoyl cysteine; by host lipidation sites follow: Cys181 and Cys184. Cys186 is subject to Cysteine methyl ester; by host. Cys186 carries the S-farnesyl cysteine; by host lipid modification. Residues 187 to 189 (VLS) constitute a propeptide, removed in mature form.

The protein belongs to the small GTPase superfamily. Ras family.

It is found in the host cell membrane. The catalysed reaction is GTP + H2O = GDP + phosphate + H(+). Its activity is regulated as follows. Alternates between an inactive form bound to GDP and an active form bound to GTP. Activated by a guanine nucleotide-exchange factor (GEF) and inactivated by a GTPase-activating protein (GAP). In Moloney murine sarcoma virus (MoMSV), this protein is GTPase HRas (H-RAS).